Here is a 257-residue protein sequence, read N- to C-terminus: MQKVTIQEAEHLLQEIMSEEDDRFQILIKDERKGVQKLILKWYKQKELAQKEKEKFLEMSKYENALREKGLTYIAGIDEVGRGPLAGPVVTAAVILPEDFYIPGLNDSKKLSEAKRERFYGEIKAKAIAIGVGIVSPQVIDEINIYQATKQAMLDAIANLSCTPEYLLIDAMKLPTPIPQTSIIKGDAKSISISAASIIAKVTRDRMMKELGEKYPAYGFEQHMGYGTKQHLEAIEAHGVLEEHRKSFAPIKDMIQK.

The RNase H type-2 domain occupies 72–257; the sequence is TYIAGIDEVG…FAPIKDMIQK (186 aa). Positions 78, 79, and 170 each coordinate a divalent metal cation.

Belongs to the RNase HII family. Mn(2+) is required as a cofactor. It depends on Mg(2+) as a cofactor.

Its subcellular location is the cytoplasm. The enzyme catalyses Endonucleolytic cleavage to 5'-phosphomonoester.. In terms of biological role, endonuclease that specifically degrades the RNA of RNA-DNA hybrids. The polypeptide is Ribonuclease HII (Bacillus thuringiensis (strain Al Hakam)).